The following is a 119-amino-acid chain: Large ribosomal subunit protein bL20 (119 aa).

This sequence belongs to the bacterial ribosomal protein bL20 family.

Binds directly to 23S ribosomal RNA and is necessary for the in vitro assembly process of the 50S ribosomal subunit. It is not involved in the protein synthesizing functions of that subunit. This Thermoanaerobacter sp. (strain X514) protein is Large ribosomal subunit protein bL20.